We begin with the raw amino-acid sequence, 525 residues long: MNDFWQHCSALLERELTPQQYVTWIKPLAPVAFDASANTLSIAAPNRFKLDWVKSQFSGRISDLAREFWNTPIEVQFVLDPKAGMRSAAASAAPAAPRAPLTPGGPAATVAAIAANLTANAAAAPSAPADVPMTPSAAAAHHLNADDADIDLPSLPAHEAAAGRRTWRPGPGAAPANGGEADSMYERSKLNPVLTFDNFVTGKANQLARAAAIQVADNPGISYNPLFLYGGVGLGKTHLIHAIGNQLLLDKAGARIRYIHAEQYVSDVVKAYQRKAFDDFKRYYHSLDLLLIDDIQFFSGKSRTQEEFFYAFEALVANKAQVIITSDTYPKEISGIDDRLISRFDSGLTVAIEPPELEMRVAILMRKAQSEGVNLSEDVAFFVAKHLRSNVRELEGALRKILAYSKFHGREISIELTKEALKDLLTVQNRQISVENIQKTVADFYNIKVADMYSKKRPANIARPRQIAMYLAKELTQKSLPEIGELFGGRDHTTVLHAVRKIADERSKDAQLNHELHVLEQTLKG.

The interval 1-71 (MNDFWQHCSA…SDLAREFWNT (71 aa)) is domain I, interacts with DnaA modulators. The segment at 71-188 (TPIEVQFVLD…GEADSMYERS (118 aa)) is domain II. The interval 162–182 (AGRRTWRPGPGAAPANGGEAD) is disordered. Residues 169 to 181 (PGPGAAPANGGEA) show a composition bias toward low complexity. Residues 189 to 405 (KLNPVLTFDN…GALRKILAYS (217 aa)) are domain III, AAA+ region. The ATP site is built by glycine 233, glycine 235, lysine 236, and threonine 237. A domain IV, binds dsDNA region spans residues 406 to 525 (KFHGREISIE…LHVLEQTLKG (120 aa)).

It belongs to the DnaA family. Oligomerizes as a right-handed, spiral filament on DNA at oriC.

It localises to the cytoplasm. Plays an essential role in the initiation and regulation of chromosomal replication. ATP-DnaA binds to the origin of replication (oriC) to initiate formation of the DNA replication initiation complex once per cell cycle. Binds the DnaA box (a 9 base pair repeat at the origin) and separates the double-stranded (ds)DNA. Forms a right-handed helical filament on oriC DNA; dsDNA binds to the exterior of the filament while single-stranded (ss)DNA is stabiized in the filament's interior. The ATP-DnaA-oriC complex binds and stabilizes one strand of the AT-rich DNA unwinding element (DUE), permitting loading of DNA polymerase. After initiation quickly degrades to an ADP-DnaA complex that is not apt for DNA replication. Binds acidic phospholipids. The sequence is that of Chromosomal replication initiator protein DnaA from Burkholderia cenocepacia (strain HI2424).